The sequence spans 181 residues: Isopentenyl-diphosphate Delta-isomerase (181 aa).

Mn(2+)-binding residues include His25 and His32. A Nudix hydrolase domain is found at 30–164 (PLHLAFSCWL…PWAFSPWMVM (135 aa)). Cys67 is an active-site residue. Residue Cys67 coordinates Mg(2+). Mn(2+) is bound at residue His69. Glu87 contributes to the Mg(2+) binding site. Positions 114 and 116 each coordinate Mn(2+). Glu116 is an active-site residue.

This sequence belongs to the IPP isomerase type 1 family. Homodimer. Mg(2+) serves as cofactor. The cofactor is Mn(2+).

It localises to the cytoplasm. It carries out the reaction isopentenyl diphosphate = dimethylallyl diphosphate. Its pathway is isoprenoid biosynthesis; dimethylallyl diphosphate biosynthesis; dimethylallyl diphosphate from isopentenyl diphosphate: step 1/1. Functionally, catalyzes the 1,3-allylic rearrangement of the homoallylic substrate isopentenyl (IPP) to its highly electrophilic allylic isomer, dimethylallyl diphosphate (DMAPP). This is Isopentenyl-diphosphate Delta-isomerase from Salmonella choleraesuis (strain SC-B67).